The sequence spans 423 residues: Acyl-coenzyme A diphosphatase FITM2 (423 aa).

The tract at residues 1-47 (MATKRRPLRPNLGGTAGSPSSSGSNMNFRPGGPDITRSEARGTRPTA) is disordered. Topologically, residues 1–75 (MATKRRPLRP…KTIFFNTDLK (75 aa)) are cytoplasmic. The chain crosses the membrane as a helical span at residues 76 to 96 (VALYLGSLFVISVIGDFVPFP). The Lumenal segment spans residues 97-113 (KTYFARSDNLFNQYFVK). The chain crosses the membrane as a helical span at residues 114 to 134 (IGWGWTLLFVVPFLVLSAYTI). Residues 135–146 (TCGDHKRMLRHH) lie on the Cytoplasmic side of the membrane. Residues 147–167 (FPRIVIATFFWFFWTKLFNVV) form a helical membrane-spanning segment. The Lumenal segment spans residues 168-191 (ENSYGRCTTKGYATKSSCLKAGHL). A helical transmembrane segment spans residues 192–212 (WKGFDISGHAFILIHSSLVLI). His-200 is an active-site residue. The Cytoplasmic portion of the chain corresponds to 213-270 (EEARPIIRWETIKEHIRNERHNRSTAENSGTNPLRTLNEEQMRSLQFLYKRLTPIIRT). The helical transmembrane segment at 271 to 291 (LFIGMAALQLLWDIMLVGTML) threads the bilayer. Residues 292–299 (YYHRMIEK) lie on the Lumenal side of the membrane. Residue His-294 is part of the active site. Residues 300 to 320 (VISGIIAILTWYFTYRFWYPT) form a helical membrane-spanning segment. Over 321–423 (PGLLPEAPGN…RDREQQTLES (103 aa)) the chain is Cytoplasmic. Disordered regions lie at residues 344 to 381 (FKRP…PRDQ) and 400 to 423 (AAAN…TLES). Over residues 351 to 367 (STGAATTSSGSNSSRTN) the composition is skewed to low complexity. A compositionally biased stretch (basic and acidic residues) spans 409–423 (QQKRERDREQQTLES).

The protein belongs to the FIT family. FIT2 subfamily.

The protein localises to the endoplasmic reticulum membrane. The enzyme catalyses an acyl-CoA + H2O = an acyl-4'-phosphopantetheine + adenosine 3',5'-bisphosphate + 2 H(+). In terms of biological role, fatty acyl-coenzyme A (CoA) diphosphatase that hydrolyzes fatty acyl-CoA to yield acyl-4'-phosphopantetheine and adenosine 3',5'-bisphosphate. Preferentially hydrolyzes unsaturated long-chain acyl-CoA substrates in the endoplasmic reticulum (ER) lumen. This catalytic activity is required for maintaining ER structure and for lipid droplets (LDs) biogenesis, which are lipid storage organelles involved in maintaining lipid and energy homeostasis. May directly bind to diacylglycerol (DAGs) and triacylglycerol, which is also important for LD biogenesis. May support directional budding of nacent LDs from the ER into the cytosol by reducing DAG levels at sites of LD formation. Plays a role in the regulation of cell morphology and cytoskeletal organization. Required for correct morphology of nociceptive multi-dendritic sensory neurons. Required for normal mechanical amplification in hearing. The protein is Acyl-coenzyme A diphosphatase FITM2 of Drosophila melanogaster (Fruit fly).